A 375-amino-acid polypeptide reads, in one-letter code: 23S rRNA (uracil(747)-C(5))-methyltransferase RlmC (375 aa).

Residues Cys3, Cys11, Cys14, and Cys87 each coordinate [4Fe-4S] cluster. S-adenosyl-L-methionine is bound by residues Gln212, Phe241, Glu262, and Asn307. Residue Cys334 is the Nucleophile of the active site.

It belongs to the class I-like SAM-binding methyltransferase superfamily. RNA M5U methyltransferase family. RlmC subfamily.

It carries out the reaction uridine(747) in 23S rRNA + S-adenosyl-L-methionine = 5-methyluridine(747) in 23S rRNA + S-adenosyl-L-homocysteine + H(+). Catalyzes the formation of 5-methyl-uridine at position 747 (m5U747) in 23S rRNA. The chain is 23S rRNA (uracil(747)-C(5))-methyltransferase RlmC from Escherichia coli O17:K52:H18 (strain UMN026 / ExPEC).